The sequence spans 468 residues: ATP synthase subunit beta (468 aa).

148–155 lines the ATP pocket; sequence GGAGVGKT.

The protein belongs to the ATPase alpha/beta chains family. F-type ATPases have 2 components, CF(1) - the catalytic core - and CF(0) - the membrane proton channel. CF(1) has five subunits: alpha(3), beta(3), gamma(1), delta(1), epsilon(1). CF(0) has three main subunits: a(1), b(2) and c(9-12). The alpha and beta chains form an alternating ring which encloses part of the gamma chain. CF(1) is attached to CF(0) by a central stalk formed by the gamma and epsilon chains, while a peripheral stalk is formed by the delta and b chains.

The protein resides in the cell inner membrane. It carries out the reaction ATP + H2O + 4 H(+)(in) = ADP + phosphate + 5 H(+)(out). In terms of biological role, produces ATP from ADP in the presence of a proton gradient across the membrane. The catalytic sites are hosted primarily by the beta subunits. This Xanthomonas campestris pv. campestris (strain 8004) protein is ATP synthase subunit beta.